Reading from the N-terminus, the 884-residue chain is Probable leucine--tRNA ligase, cytoplasmic (884 aa).

The 'HIGH' region motif lies at 40-50 (PYMNGKLHLGH). The 'KMSKS' region signature appears at 566 to 570 (KMSKS). K569 provides a ligand contact to ATP.

This sequence belongs to the class-I aminoacyl-tRNA synthetase family.

Its subcellular location is the cytoplasm. It carries out the reaction tRNA(Leu) + L-leucine + ATP = L-leucyl-tRNA(Leu) + AMP + diphosphate. The polypeptide is Probable leucine--tRNA ligase, cytoplasmic (Vairimorpha ceranae (strain BRL01) (Microsporidian parasite)).